Consider the following 331-residue polypeptide: Ketol-acid reductoisomerase (NADP(+)) (331 aa).

Residues 2–182 enclose the KARI N-terminal Rossmann domain; sequence VEIYYDDDAN…GGTRAGALRT (181 aa). Residues 25–28, Ser-51, and Ser-53 contribute to the NADP(+) site; that span reads FGSQ. Residue His-108 is part of the active site. Gly-134 serves as a coordination point for NADP(+). Residues 183–328 form the KARI C-terminal knotted domain; sequence TFTEETETDL…GKLRPMMSWI (146 aa). Asp-191, Glu-195, Glu-227, and Glu-231 together coordinate Mg(2+). Ser-252 is a binding site for substrate.

It belongs to the ketol-acid reductoisomerase family. Requires Mg(2+) as cofactor.

It catalyses the reaction (2R)-2,3-dihydroxy-3-methylbutanoate + NADP(+) = (2S)-2-acetolactate + NADPH + H(+). It carries out the reaction (2R,3R)-2,3-dihydroxy-3-methylpentanoate + NADP(+) = (S)-2-ethyl-2-hydroxy-3-oxobutanoate + NADPH + H(+). Its pathway is amino-acid biosynthesis; L-isoleucine biosynthesis; L-isoleucine from 2-oxobutanoate: step 2/4. It participates in amino-acid biosynthesis; L-valine biosynthesis; L-valine from pyruvate: step 2/4. Functionally, involved in the biosynthesis of branched-chain amino acids (BCAA). Catalyzes an alkyl-migration followed by a ketol-acid reduction of (S)-2-acetolactate (S2AL) to yield (R)-2,3-dihydroxy-isovalerate. In the isomerase reaction, S2AL is rearranged via a Mg-dependent methyl migration to produce 3-hydroxy-3-methyl-2-ketobutyrate (HMKB). In the reductase reaction, this 2-ketoacid undergoes a metal-dependent reduction by NADPH to yield (R)-2,3-dihydroxy-isovalerate. This Parafrankia sp. (strain EAN1pec) protein is Ketol-acid reductoisomerase (NADP(+)).